A 489-amino-acid chain; its full sequence is Rhamnulokinase (489 aa).

13–17 (ASSGR) is a binding site for ATP. A disulfide bridge connects residues Cys-68 and Cys-222. Substrate is bound by residues Gly-83 and 236-238 (HDT). The Proton acceptor role is filled by Asp-237. Thr-259 lines the ATP pocket. Residue Asn-296 coordinates substrate. An ATP-binding site is contributed by Gln-304. Cys-353 and Cys-370 form a disulfide bridge. An ATP-binding site is contributed by Gly-402. Cys-413 and Cys-417 are joined by a disulfide.

The protein belongs to the rhamnulokinase family. Mg(2+) serves as cofactor.

The enzyme catalyses L-rhamnulose + ATP = L-rhamnulose 1-phosphate + ADP + H(+). It functions in the pathway carbohydrate degradation; L-rhamnose degradation; glycerone phosphate from L-rhamnose: step 2/3. Involved in the catabolism of L-rhamnose (6-deoxy-L-mannose). Catalyzes the transfer of the gamma-phosphate group from ATP to the 1-hydroxyl group of L-rhamnulose to yield L-rhamnulose 1-phosphate. The polypeptide is Rhamnulokinase (Shigella sonnei (strain Ss046)).